The following is a 141-amino-acid chain: uncharacterized protein (141 aa).

This is an uncharacterized protein from Thermoproteus tenax (TTV1).